The sequence spans 338 residues: MSSEMLPAFSETCNVERQKNLSEDGEQNQKPGSSERFQPISKRQMKKLMKQKQWEEQRELRKQKRKEKRKRKQLERQCQPESNSDGSDRKRIRRDVVHSPLRLIIDCSFDSLMVLKDIKKLHKQIQRCYAENRRALHPVQFYLTSHGGQLKKNMDENDKGWVNWKDIHIKPEHYSEFIQKEDLIYLTSDSPNILKELDESKAYVIGGLVDHNHHKGLTYKQASDHGIDHAQLPLGNFVKMNSRKVLAVNHVFEIILEYLETRDWQEAFFTILPQRKGAVPTDQACESCSHDKKFARVEGGLNSDSSEEENRHELDSTHEEEKQDKENSTESTVNSVPH.

2 disordered regions span residues 1 to 91 and 296 to 338; these read MSSE…DRKR and RVEG…SVPH. Residue Ser22 is modified to Phosphoserine. Residues 52-80 are a coiled coil; it reads KQWEEQRELRKQKRKEKRKRKQLERQCQP. Residues 61-73 are compositionally biased toward basic residues; it reads RKQKRKEKRKRKQ. In terms of domain architecture, SAM-dependent MTase TRM10-type spans 88-279; it reads DRKRIRRDVV…TILPQRKGAV (192 aa). Residues 308-328 are compositionally biased toward basic and acidic residues; sequence EENRHELDSTHEEEKQDKENS. The span at 329–338 shows a compositional bias: polar residues; that stretch reads TESTVNSVPH. A Phosphoserine modification is found at Ser335.

It belongs to the class IV-like SAM-binding methyltransferase superfamily. TRM10 family. In terms of assembly, interacts with tRNA.

Its subcellular location is the nucleus. It is found in the nucleolus. It carries out the reaction guanosine(9) in tRNA + S-adenosyl-L-methionine = N(1)-methylguanosine(9) in tRNA + S-adenosyl-L-homocysteine + H(+). In terms of biological role, S-adenosyl-L-methionine-dependent guanine N(1)-methyltransferase that catalyzes the formation of N(1)-methylguanine at position 9 (m1G9) in tRNAs. Probably not able to catalyze formation of N(1)-methyladenine at position 9 (m1A9) in tRNAs. The protein is tRNA methyltransferase 10 homolog A (TRMT10A) of Bos taurus (Bovine).